A 107-amino-acid polypeptide reads, in one-letter code: Large ribosomal subunit protein bL21c (107 aa).

It belongs to the bacterial ribosomal protein bL21 family. In terms of assembly, part of the 50S ribosomal subunit.

It localises to the plastid. It is found in the chloroplast. In terms of biological role, this protein binds to 23S rRNA. This is Large ribosomal subunit protein bL21c from Cyanidioschyzon merolae (strain NIES-3377 / 10D) (Unicellular red alga).